The sequence spans 897 residues: Translation initiation factor IF-2 (897 aa).

Disordered regions lie at residues 69 to 88 (RKTK…KEVQ) and 95 to 304 (RTYV…NAMK). Residues 101 to 161 (SALEDEQRQA…EEKARIEAQQ (61 aa)) show a composition bias toward basic and acidic residues. Residues 162–179 (KARQAQQPAKAAGSTAQQ) show a composition bias toward low complexity. Composition is skewed to basic and acidic residues over residues 180-196 (EAEK…KRQQ), 203-217 (KAEE…EARV), 226-239 (WAEE…ESSD), and 277-286 (RREDDRDARN). Over residues 287 to 296 (PRARKGKRGK) the composition is skewed to basic residues. Residues 397 to 566 (PRAPVVTIMG…LIQSEVLELK (170 aa)) form the tr-type G domain. A G1 region spans residues 406 to 413 (GHVDHGKT). 406–413 (GHVDHGKT) is a GTP binding site. Residues 431 to 435 (GITQH) are G2. The G3 stretch occupies residues 452–455 (DTPG). GTP is bound by residues 452-456 (DTPGH) and 506-509 (NKID). The G4 stretch occupies residues 506–509 (NKID). The G5 stretch occupies residues 542 to 544 (SAK).

It belongs to the TRAFAC class translation factor GTPase superfamily. Classic translation factor GTPase family. IF-2 subfamily.

The protein localises to the cytoplasm. In terms of biological role, one of the essential components for the initiation of protein synthesis. Protects formylmethionyl-tRNA from spontaneous hydrolysis and promotes its binding to the 30S ribosomal subunits. Also involved in the hydrolysis of GTP during the formation of the 70S ribosomal complex. In Aeromonas hydrophila subsp. hydrophila (strain ATCC 7966 / DSM 30187 / BCRC 13018 / CCUG 14551 / JCM 1027 / KCTC 2358 / NCIMB 9240 / NCTC 8049), this protein is Translation initiation factor IF-2.